A 339-amino-acid polypeptide reads, in one-letter code: MVVTAAGSAEEAVRRWVDAAGGRLVLDGGLATELEANGADLNDPLWSAKCLLSSPHLIRKVHMDYLEAGANIIITASYQATIQGFESKGFSKEQSENLLTKSVEIALEAREMFLKEHLEKSTPIQHPVLVAASLGSYGAYLADGSEYSGDYGEAGTKEFLKDFHRRRLQVLAEAGPDLIAFETIPNKLEAEAYVELLEECNINIPAWFSFNSKDGVHIVSGDSLIECTTIADKCAKVGAVGINCTPPRFIHGLILSIRKVTDKPILIYPNSGERYDGEKKEWVESTGVSDGDFVSYVNEWCKDGAVLIGGCCRTTPNTIRAIHRTLNKSPNKQQLPAVE.

One can recognise a Hcy-binding domain in the interval 12 to 326 (AVRRWVDAAG…NTIRAIHRTL (315 aa)). The Zn(2+) site is built by C244, C311, and C312.

In terms of assembly, monomer. The cofactor is Zn(2+).

The enzyme catalyses S-methyl-L-methionine + L-homocysteine = 2 L-methionine + H(+). Functionally, catalyzes methyl transfer from S-methylmethionine (SMM) to adenosyl-L-homocysteine (AdoMet). SMM degradation (by HMT-1, HMT-2, HMT-3 and HMT-4) and biosynthesis (by MMT1) constitute the SMM cycle in plants, which is probably required to achieve short term control of AdoMet level. The chain is Homocysteine S-methyltransferase 2 (HMT-2) from Zea mays (Maize).